A 65-amino-acid polypeptide reads, in one-letter code: Large ribosomal subunit protein bL35 (65 aa).

Belongs to the bacterial ribosomal protein bL35 family.

The chain is Large ribosomal subunit protein bL35 from Thermoanaerobacter pseudethanolicus (strain ATCC 33223 / 39E) (Clostridium thermohydrosulfuricum).